A 355-amino-acid chain; its full sequence is S-adenosylmethionine:tRNA ribosyltransferase-isomerase (355 aa).

The protein belongs to the QueA family. As to quaternary structure, monomer.

Its subcellular location is the cytoplasm. It carries out the reaction 7-aminomethyl-7-carbaguanosine(34) in tRNA + S-adenosyl-L-methionine = epoxyqueuosine(34) in tRNA + adenine + L-methionine + 2 H(+). It functions in the pathway tRNA modification; tRNA-queuosine biosynthesis. Its function is as follows. Transfers and isomerizes the ribose moiety from AdoMet to the 7-aminomethyl group of 7-deazaguanine (preQ1-tRNA) to give epoxyqueuosine (oQ-tRNA). The chain is S-adenosylmethionine:tRNA ribosyltransferase-isomerase from Aeromonas salmonicida (strain A449).